The sequence spans 176 residues: GTP-dependent dephospho-CoA kinase (176 aa).

Residues D47, V48, D66, and E125 each contribute to the GTP site.

Belongs to the GTP-dependent DPCK family.

The enzyme catalyses 3'-dephospho-CoA + GTP = GDP + CoA + H(+). The protein operates within cofactor biosynthesis; coenzyme A biosynthesis. Its function is as follows. Catalyzes the GTP-dependent phosphorylation of the 3'-hydroxyl group of dephosphocoenzyme A to form coenzyme A (CoA). The protein is GTP-dependent dephospho-CoA kinase of Methanocella arvoryzae (strain DSM 22066 / NBRC 105507 / MRE50).